The primary structure comprises 534 residues: Probable alpha-galactosidase A (534 aa).

An N-terminal signal peptide occupies residues 1–25 (MRLITRWIPLANALASTMPVQVVAS). Cysteines 47 and 79 form a disulfide. N50, N88, N94, and N124 each carry an N-linked (GlcNAc...) asparagine glycan. Residues C127 and C157 are joined by a disulfide bond. D155 serves as the catalytic Nucleophile. N-linked (GlcNAc...) asparagine glycosylation occurs at N204. Catalysis depends on D213, which acts as the Proton donor. One can recognise a Ricin B-type lectin domain in the interval 413–534 (CSQVIPTGLI…GLPAGVHVAL (122 aa)). A disulfide bridge connects residues C430 and C443. N-linked (GlcNAc...) asparagine glycosylation is present at N444. C468 and C481 are joined by a disulfide.

Belongs to the glycosyl hydrolase 27 family.

It is found in the secreted. The enzyme catalyses Hydrolysis of terminal, non-reducing alpha-D-galactose residues in alpha-D-galactosides, including galactose oligosaccharides, galactomannans and galactolipids.. Hydrolyzes a variety of simple alpha-D-galactoside as well as more complex molecules such as oligosaccharides and polysaccharides. The protein is Probable alpha-galactosidase A (aglA) of Aspergillus flavus (strain ATCC 200026 / FGSC A1120 / IAM 13836 / NRRL 3357 / JCM 12722 / SRRC 167).